A 102-amino-acid chain; its full sequence is Large ribosomal subunit protein uL24 (102 aa).

It belongs to the universal ribosomal protein uL24 family. In terms of assembly, part of the 50S ribosomal subunit.

Functionally, one of two assembly initiator proteins, it binds directly to the 5'-end of the 23S rRNA, where it nucleates assembly of the 50S subunit. One of the proteins that surrounds the polypeptide exit tunnel on the outside of the subunit. This is Large ribosomal subunit protein uL24 from Lysinibacillus sphaericus (strain C3-41).